Here is a 165-residue protein sequence, read N- to C-terminus: MADKFSFDIVSEVNMMEVDNAVNQARKELANRFDFKDSKSSIELNKKDKKITLIADNEYKMKALKDILEGRFAKRNVSIKSLDYKVQENAFEGYIRQTAEIISGLSSDRAKELSKLIRDSKIKVQAQIDGTKIKVISTKKDDLQLVIAYLKQLSFPLPLQFTNYR.

The protein belongs to the YajQ family.

Its function is as follows. Nucleotide-binding protein. In Endomicrobium trichonymphae, this protein is Nucleotide-binding protein TGRD_519.